We begin with the raw amino-acid sequence, 200 residues long: Probable GTP-binding protein EngB (200 aa).

The region spanning 25–199 (SGYEVAFAGR…ISLLDRWYEW (175 aa)) is the EngB-type G domain. GTP is bound by residues 33-40 (GRSNAGKS), 60-64 (GRTQL), 78-81 (DLPG), 145-148 (TKAD), and 178-180 (FSS). 2 residues coordinate Mg(2+): S40 and T62.

Belongs to the TRAFAC class TrmE-Era-EngA-EngB-Septin-like GTPase superfamily. EngB GTPase family. Requires Mg(2+) as cofactor.

Its function is as follows. Necessary for normal cell division and for the maintenance of normal septation. In Legionella pneumophila (strain Corby), this protein is Probable GTP-binding protein EngB.